Consider the following 397-residue polypeptide: Elongation factor Tu (397 aa).

The tr-type G domain occupies 10–207 (KPHVNIGTIG…AVDESIPDPV (198 aa)). A G1 region spans residues 19–26 (GHVDHGKT). GTP is bound at residue 19-26 (GHVDHGKT). Thr26 provides a ligand contact to Mg(2+). A G2 region spans residues 63–67 (GITIN). Residues 84 to 87 (DAPG) form a G3 region. Residues 84 to 88 (DAPGH) and 139 to 142 (NKAD) contribute to the GTP site. The interval 139-142 (NKAD) is G4. The tract at residues 177-179 (SGL) is G5.

Belongs to the TRAFAC class translation factor GTPase superfamily. Classic translation factor GTPase family. EF-Tu/EF-1A subfamily. In terms of assembly, monomer.

It localises to the cytoplasm. The catalysed reaction is GTP + H2O = GDP + phosphate + H(+). GTP hydrolase that promotes the GTP-dependent binding of aminoacyl-tRNA to the A-site of ribosomes during protein biosynthesis. This chain is Elongation factor Tu, found in Tropheryma whipplei (strain Twist) (Whipple's bacillus).